A 178-amino-acid chain; its full sequence is Large ribosomal subunit protein eL20y (178 aa).

Belongs to the eukaryotic ribosomal protein eL20 family.

The polypeptide is Large ribosomal subunit protein eL20y (RPL18AB) (Arabidopsis thaliana (Mouse-ear cress)).